Consider the following 360-residue polypeptide: uncharacterized protein (360 aa).

Solcar repeat units lie at residues 34–153, 172–256, and 266–355; these read VGVL…LSVW, PDWS…FKTN, and NPFV…FKFL. 6 helical membrane-spanning segments follow: residues 40 to 60, 125 to 145, 178 to 198, 225 to 247, 269 to 289, and 327 to 348; these read VSAS…LDVV, LWSG…FYFT, AVAG…IEMI, ISSF…GIYW, VVSF…THPF, and FSSG…MISF.

Belongs to the mitochondrial carrier (TC 2.A.29) family.

It is found in the mitochondrion inner membrane. This is an uncharacterized protein from Caenorhabditis elegans.